A 335-amino-acid chain; its full sequence is Glutamyl-tRNA reductase (335 aa).

Substrate-binding positions include 60 to 63 (TCHR), serine 110, 115 to 117 (ETE), and glutamine 121. Cysteine 61 functions as the Nucleophile in the catalytic mechanism. 189-194 (GYSEIN) serves as a coordination point for NADP(+).

The protein belongs to the glutamyl-tRNA reductase family. In terms of assembly, homodimer.

The catalysed reaction is (S)-4-amino-5-oxopentanoate + tRNA(Glu) + NADP(+) = L-glutamyl-tRNA(Glu) + NADPH + H(+). Its pathway is porphyrin-containing compound metabolism; protoporphyrin-IX biosynthesis; 5-aminolevulinate from L-glutamyl-tRNA(Glu): step 1/2. In terms of biological role, catalyzes the NADPH-dependent reduction of glutamyl-tRNA(Glu) to glutamate 1-semialdehyde (GSA). In Chlamydia trachomatis serovar A (strain ATCC VR-571B / DSM 19440 / HAR-13), this protein is Glutamyl-tRNA reductase.